The chain runs to 103 residues: Cycloviolacin-O9 (103 aa).

A signal peptide spans 1–9; the sequence is AAFALPAFA. The propeptide occupies 10 to 69; it reads SFEKDVITPAALEAVLNRKAPLYNIMMENDAILNVIANVKTVISNPVLEEALLKTNHGVN. Positions 70-99 form a cross-link, cyclopeptide (Gly-Asn); the sequence is GIPCGESCVWIPCLTSAVGCSCKSKVCYRN. 3 disulfides stabilise this stretch: Cys73–Cys89, Cys77–Cys91, and Cys82–Cys96. Positions 100 to 103 are excised as a propeptide; it reads SLDN.

Post-translationally, this is a cyclic peptide.

In terms of biological role, probably participates in a plant defense mechanism. In Viola biflora (Yellow wood violet), this protein is Cycloviolacin-O9.